We begin with the raw amino-acid sequence, 236 residues long: 2,3,4,5-tetrahydropyridine-2,6-dicarboxylate N-acetyltransferase (236 aa).

The protein belongs to the transferase hexapeptide repeat family. DapH subfamily.

It catalyses the reaction (S)-2,3,4,5-tetrahydrodipicolinate + acetyl-CoA + H2O = L-2-acetamido-6-oxoheptanedioate + CoA. It participates in amino-acid biosynthesis; L-lysine biosynthesis via DAP pathway; LL-2,6-diaminopimelate from (S)-tetrahydrodipicolinate (acetylase route): step 1/3. Its function is as follows. Catalyzes the transfer of an acetyl group from acetyl-CoA to tetrahydrodipicolinate. In Geobacillus thermodenitrificans (strain NG80-2), this protein is 2,3,4,5-tetrahydropyridine-2,6-dicarboxylate N-acetyltransferase.